A 241-amino-acid polypeptide reads, in one-letter code: Aliphatic sulfonates import ATP-binding protein SsuB (241 aa).

In terms of domain architecture, ABC transporter spans 10–226; sequence VHLHGFSRSF…RPDHPAFMQL (217 aa). Position 42–49 (42–49) interacts with ATP; the sequence is GESGSGKT.

The protein belongs to the ABC transporter superfamily. Aliphatic sulfonates importer (TC 3.A.1.17.2) family. The complex is composed of two ATP-binding proteins (SsuB), two transmembrane proteins (SsuC) and a solute-binding protein (SsuA).

The protein localises to the cell inner membrane. The catalysed reaction is ATP + H2O + aliphatic sulfonate-[sulfonate-binding protein]Side 1 = ADP + phosphate + aliphatic sulfonateSide 2 + [sulfonate-binding protein]Side 1.. Its function is as follows. Part of the ABC transporter complex SsuABC involved in aliphatic sulfonates import. Responsible for energy coupling to the transport system. The protein is Aliphatic sulfonates import ATP-binding protein SsuB of Delftia acidovorans (Pseudomonas acidovorans).